The primary structure comprises 125 residues: Large ribosomal subunit protein uL22 (125 aa).

It belongs to the universal ribosomal protein uL22 family. Part of the 50S ribosomal subunit.

This protein binds specifically to 23S rRNA; its binding is stimulated by other ribosomal proteins, e.g. L4, L17, and L20. It is important during the early stages of 50S assembly. It makes multiple contacts with different domains of the 23S rRNA in the assembled 50S subunit and ribosome. In terms of biological role, the globular domain of the protein is located near the polypeptide exit tunnel on the outside of the subunit, while an extended beta-hairpin is found that lines the wall of the exit tunnel in the center of the 70S ribosome. The protein is Large ribosomal subunit protein uL22 of Acetivibrio thermocellus (strain ATCC 27405 / DSM 1237 / JCM 9322 / NBRC 103400 / NCIMB 10682 / NRRL B-4536 / VPI 7372) (Clostridium thermocellum).